A 328-amino-acid chain; its full sequence is Arabinose 5-phosphate isomerase KdsD (328 aa).

Residues 42-184 (CEKMFWCKGK…AVALLKARGF (143 aa)) form the SIS domain. Substrate contacts are provided by residues 75–76 (GT), H82, H88, 114–123 (ALIPVLKRLH), 148–150 (KVA), T222, and D275. A Zn(2+)-binding site is contributed by H82. A CBS 1 domain is found at 210-268 (MHTGDEIPHVKKTASLRDALLEVTRKNLGMTVICDDNMMIEGIFTDGDLRRVFDMGVDV). The CBS 2 domain maps to 277–328 (MTPGGIRVRPGILAVEALNLMQSRHITSVMVADGDHLLGVLHMHDLLRAGVV).

The protein belongs to the SIS family. GutQ/KpsF subfamily. In terms of assembly, homotetramer.

It catalyses the reaction D-arabinose 5-phosphate = D-ribulose 5-phosphate. Its pathway is carbohydrate biosynthesis; 3-deoxy-D-manno-octulosonate biosynthesis; 3-deoxy-D-manno-octulosonate from D-ribulose 5-phosphate: step 1/3. It participates in bacterial outer membrane biogenesis; lipopolysaccharide biosynthesis. Completely inhibited by 10 uM of nickel, copper, cadmium and mercury ions. Inhibited by zinc with an IC(50) of 1-3 uM. Metal ion inhibition may be a mechanism to control activity in vivo. In terms of biological role, involved in the biosynthesis of 3-deoxy-D-manno-octulosonate (KDO), a unique 8-carbon sugar component of lipopolysaccharides (LPSs). KdsD is not essential in the KDO biosynthesis and can be substituted by GutQ. Catalyzes the reversible aldol-ketol isomerization between D-ribulose 5-phosphate (Ru5P) and D-arabinose 5-phosphate (A5P). The chain is Arabinose 5-phosphate isomerase KdsD (kdsD) from Escherichia coli (strain K12).